The chain runs to 968 residues: uncharacterized protein (968 aa).

The helical transmembrane segment at 12 to 32 (LIFIFSLFFLILFFLESSIGF) threads the bilayer.

This sequence to E.coli YtfN.

Its subcellular location is the membrane. This is an uncharacterized protein from Buchnera aphidicola subsp. Schizaphis graminum (strain Sg).